The sequence spans 336 residues: Formimidoylglutamase (336 aa).

Residues 1 to 10 are compositionally biased toward polar residues; the sequence is MNPNFTTEHT. A disordered region spans residues 1 to 22; it reads MNPNFTTEHTWQGRHDPEDGQA. Over residues 11-22 the composition is skewed to basic and acidic residues; that stretch reads WQGRHDPEDGQA. 6 residues coordinate Mn(2+): His-127, Asp-157, His-159, Asp-161, Asp-254, and Asp-256.

This sequence belongs to the arginase family. It depends on Mn(2+) as a cofactor.

The enzyme catalyses N-formimidoyl-L-glutamate + H2O = formamide + L-glutamate. Its pathway is amino-acid degradation; L-histidine degradation into L-glutamate; L-glutamate from N-formimidoyl-L-glutamate (hydrolase route): step 1/1. Catalyzes the conversion of N-formimidoyl-L-glutamate to L-glutamate and formamide. The chain is Formimidoylglutamase from Vibrio cholerae serotype O1 (strain ATCC 39541 / Classical Ogawa 395 / O395).